A 39-amino-acid polypeptide reads, in one-letter code: Photosystem II reaction center protein J (39 aa).

The chain crosses the membrane as a helical span at residues Leu-9–Tyr-29.

This sequence belongs to the PsbJ family. PSII is composed of 1 copy each of membrane proteins PsbA, PsbB, PsbC, PsbD, PsbE, PsbF, PsbH, PsbI, PsbJ, PsbK, PsbL, PsbM, PsbT, PsbX, PsbY, PsbZ, Psb30/Ycf12, at least 3 peripheral proteins of the oxygen-evolving complex and a large number of cofactors. It forms dimeric complexes.

The protein localises to the plastid. Its subcellular location is the chloroplast thylakoid membrane. Functionally, one of the components of the core complex of photosystem II (PSII). PSII is a light-driven water:plastoquinone oxidoreductase that uses light energy to abstract electrons from H(2)O, generating O(2) and a proton gradient subsequently used for ATP formation. It consists of a core antenna complex that captures photons, and an electron transfer chain that converts photonic excitation into a charge separation. The protein is Photosystem II reaction center protein J of Phaeodactylum tricornutum (strain CCAP 1055/1).